An 88-amino-acid chain; its full sequence is Apolipoprotein C-I (88 aa).

The N-terminal stretch at 1–26 is a signal peptide; sequence MRLFISLPVLIVVLAMALEGPAPAQA.

This sequence belongs to the apolipoprotein C1 family.

The protein localises to the secreted. Its function is as follows. Inhibitor of lipoprotein binding to the low density lipoprotein (LDL) receptor, LDL receptor-related protein, and very low density lipoprotein (VLDL) receptor. Associates with high density lipoproteins (HDL) and the triacylglycerol-rich lipoproteins in the plasma and makes up about 10% of the protein of the VLDL and 2% of that of HDL. Appears to interfere directly with fatty acid uptake and is also the major plasma inhibitor of cholesteryl ester transfer protein (CETP). Modulates the interaction of APOE with beta-migrating VLDL and inhibits binding of beta-VLDL to the LDL receptor-related protein. Binds free fatty acids and reduces their intracellular esterification. The chain is Apolipoprotein C-I (APOC1) from Myodes glareolus (Bank vole).